Consider the following 940-residue polypeptide: Protein translocase subunit SecA (940 aa).

ATP-binding positions include glutamine 86, 104–108 (GEGKT), and aspartate 494. The segment at 884 to 940 (ATAKAQKDQQAEDAVLVGEDEPETPQGPPARGAFGQPTGASSAPQNREERRKADRRK) is disordered. Basic and acidic residues predominate over residues 929-940 (NREERRKADRRK).

The protein belongs to the SecA family. In terms of assembly, monomer and homodimer. Part of the essential Sec protein translocation apparatus which comprises SecA, SecYEG and auxiliary proteins SecDF. Other proteins may also be involved.

The protein localises to the cell membrane. It localises to the cytoplasm. It carries out the reaction ATP + H2O + cellular proteinSide 1 = ADP + phosphate + cellular proteinSide 2.. In terms of biological role, part of the Sec protein translocase complex. Interacts with the SecYEG preprotein conducting channel. Has a central role in coupling the hydrolysis of ATP to the transfer of proteins into and across the cell membrane, serving as an ATP-driven molecular motor driving the stepwise translocation of polypeptide chains across the membrane. The protein is Protein translocase subunit SecA of Clavibacter sepedonicus (Clavibacter michiganensis subsp. sepedonicus).